The primary structure comprises 308 residues: MNPPSKIKHYLQFKDFSLEEYAYLLDRSRILKAKFKNYETWHPLHDRTLAMIFEKNSTRTRLSFEAGIHQLGGHAVFLNTRDSQLGRGEPIEDAAQVISRMTDIIMIRTFGQEIIERFATHSRVPVINGLTNEYHPCQVLADIFTFIEHRGPIQGKTVTWVGDANNMAYTWIQAAEILGFRFHFSAPKGYQLDPVMVADSSRPFVHVFENPLEACEGAHLVTTDVWTSMGYEAENEARKKAFGDWMVTEAMMQRAQPDALFMHCLPAHRGEEVEAAVIDGKQSVVWDEAENRLHVQKALMEYLLCGRY.

Carbamoyl phosphate contacts are provided by residues 57–60 (STRT), glutamine 84, arginine 108, and 135–138 (HPCQ). L-ornithine is bound by residues asparagine 166, aspartate 224, and 228 to 229 (SM). Carbamoyl phosphate-binding positions include 264–265 (CL) and arginine 292.

Belongs to the aspartate/ornithine carbamoyltransferase superfamily. OTCase family.

It is found in the cytoplasm. The enzyme catalyses carbamoyl phosphate + L-ornithine = L-citrulline + phosphate + H(+). Its pathway is amino-acid biosynthesis; L-arginine biosynthesis; L-arginine from L-ornithine and carbamoyl phosphate: step 1/3. Its function is as follows. Reversibly catalyzes the transfer of the carbamoyl group from carbamoyl phosphate (CP) to the N(epsilon) atom of ornithine (ORN) to produce L-citrulline. The polypeptide is Ornithine carbamoyltransferase (Ralstonia nicotianae (strain ATCC BAA-1114 / GMI1000) (Ralstonia solanacearum)).